The chain runs to 126 residues: Aspartate 1-decarboxylase (126 aa).

Residue Ser25 is the Schiff-base intermediate with substrate; via pyruvic acid of the active site. Ser25 is modified (pyruvic acid (Ser)). Residue Thr57 coordinates substrate. The Proton donor role is filled by Tyr58. Position 73–75 (73–75 (GAA)) interacts with substrate.

This sequence belongs to the PanD family. Heterooctamer of four alpha and four beta subunits. The cofactor is pyruvate. Post-translationally, is synthesized initially as an inactive proenzyme, which is activated by self-cleavage at a specific serine bond to produce a beta-subunit with a hydroxyl group at its C-terminus and an alpha-subunit with a pyruvoyl group at its N-terminus.

It is found in the cytoplasm. The catalysed reaction is L-aspartate + H(+) = beta-alanine + CO2. It participates in cofactor biosynthesis; (R)-pantothenate biosynthesis; beta-alanine from L-aspartate: step 1/1. Catalyzes the pyruvoyl-dependent decarboxylation of aspartate to produce beta-alanine. The sequence is that of Aspartate 1-decarboxylase from Chromohalobacter salexigens (strain ATCC BAA-138 / DSM 3043 / CIP 106854 / NCIMB 13768 / 1H11).